Reading from the N-terminus, the 294-residue chain is Cytidine deaminase (294 aa).

CMP/dCMP-type deaminase domains follow at residues 49 to 169 (TPQQ…FGPA) and 188 to 294 (ETQD…YIAL). Residue 90 to 92 (NLE) coordinates substrate. His103 provides a ligand contact to Zn(2+). The active-site Proton donor is Glu105. Zn(2+) contacts are provided by Cys130 and Cys133.

Belongs to the cytidine and deoxycytidylate deaminase family. As to quaternary structure, homodimer. It depends on Zn(2+) as a cofactor.

The catalysed reaction is cytidine + H2O + H(+) = uridine + NH4(+). It carries out the reaction 2'-deoxycytidine + H2O + H(+) = 2'-deoxyuridine + NH4(+). Functionally, this enzyme scavenges exogenous and endogenous cytidine and 2'-deoxycytidine for UMP synthesis. The sequence is that of Cytidine deaminase from Pasteurella multocida (strain Pm70).